The following is a 195-amino-acid chain: Peptidyl-tRNA hydrolase (195 aa).

Tyr17 is a binding site for tRNA. The Proton acceptor role is filled by His22. Positions 68, 70, and 116 each coordinate tRNA.

It belongs to the PTH family. Monomer.

It localises to the cytoplasm. The enzyme catalyses an N-acyl-L-alpha-aminoacyl-tRNA + H2O = an N-acyl-L-amino acid + a tRNA + H(+). Functionally, hydrolyzes ribosome-free peptidyl-tRNAs (with 1 or more amino acids incorporated), which drop off the ribosome during protein synthesis, or as a result of ribosome stalling. Catalyzes the release of premature peptidyl moieties from peptidyl-tRNA molecules trapped in stalled 50S ribosomal subunits, and thus maintains levels of free tRNAs and 50S ribosomes. The sequence is that of Peptidyl-tRNA hydrolase from Shewanella sp. (strain MR-4).